The sequence spans 329 residues: Flotillin-like protein FloA (329 aa).

A run of 2 helical transmembrane segments spans residues 6 to 26 (FIVI…FVPI) and 27 to 47 (GLWI…LVGM).

The protein belongs to the flotillin-like FloA family. As to quaternary structure, homooligomerizes.

It localises to the cell membrane. It is found in the membrane raft. Functionally, found in functional membrane microdomains (FMM) that may be equivalent to eukaryotic membrane rafts. FMMs are highly dynamic and increase in number as cells age. Flotillins are thought to be important factors in membrane fluidity. The protein is Flotillin-like protein FloA of Staphylococcus aureus (strain USA300).